A 274-amino-acid polypeptide reads, in one-letter code: MEMESFMDDLLNFSVPEEEEDDDEHTQPPRNITRRKTGLRPTDSFGLFNTDDLGVVEEEDLEWISNKNAFPVIETFVGVLPSEHFPITSLLEREATEVKQLSPVSVLETSSHSSTTTTSNSSGGSNGSTAVATTTTTPTIMSCCVGFKAPAKARSKRRRTGRRDLRVLWTGNEQGGIQKKKTMTVAAAALIMGRKCQHCGAEKTPQWRAGPAGPKTLCNACGVRYKSGRLVPEYRPANSPTFTAELHSNSHRKIVEMRKQYQSGDGDGDRKDCG.

Disordered regions lie at residues 1 to 39 (MEME…KTGL) and 102 to 132 (SPVS…TAVA). The Nuclear localization signal motif lies at 152–159 (KARSKRRR). A GATA-type zinc finger spans residues 190–244 (LIMGRKCQHCGAEKTPQWRAGPAGPKTLCNACGVRYKSGRLVPEYRPANSPTFTA).

This sequence belongs to the type IV zinc-finger family. Class A subfamily. In terms of tissue distribution, mostly expressed in roots. Also expressed in stems, flowers and leaves.

The protein localises to the nucleus. Its function is as follows. Transcriptional activator that specifically binds 5'-GATA-3' or 5'-GAT-3' motifs within gene promoters. May be involved in the regulation of some light-responsive genes. In Arabidopsis thaliana (Mouse-ear cress), this protein is GATA transcription factor 1 (GATA1).